The primary structure comprises 482 residues: Anaerobic nitric oxide reductase flavorubredoxin (482 aa).

The segment at 30–210 (LRGSSYNSYL…PFSRLVTPKI (181 aa)) is zinc metallo-hydrolase. Fe cation is bound by residues His-79, Glu-81, Asp-83, His-147, Asp-166, and His-227. The Flavodoxin-like domain occupies 254–393 (ITIFYDTMSN…LCRQHGRDIA (140 aa)). Residues 260 to 264 (TMSNN) and 342 to 369 (AFGS…EMSL) contribute to the FMN site. The region spanning 426–477 (GPMMQCSVCQWVYDPAKGEPNQDVQPGTPWSEVPDNFLCPECSLGKDVFDVL) is the Rubredoxin-like domain. Fe cation is bound by residues Cys-431, Cys-434, Cys-464, and Cys-467.

This sequence in the N-terminal section; belongs to the zinc metallo-hydrolase group 3 family. As to quaternary structure, homotetramer. It depends on Fe cation as a cofactor. Requires FMN as cofactor.

The protein localises to the cytoplasm. It participates in nitrogen metabolism; nitric oxide reduction. Functionally, anaerobic nitric oxide reductase; uses NADH to detoxify nitric oxide (NO), protecting several 4Fe-4S NO-sensitive enzymes. Has at least 2 reductase partners, only one of which (NorW, flavorubredoxin reductase) has been identified. NO probably binds to the di-iron center; electrons enter from the NorW at rubredoxin and are transferred sequentially to the FMN center and the di-iron center. Also able to function as an aerobic oxygen reductase. This chain is Anaerobic nitric oxide reductase flavorubredoxin, found in Klebsiella pneumoniae subsp. pneumoniae (strain ATCC 700721 / MGH 78578).